A 397-amino-acid chain; its full sequence is Phosphoglycerate kinase (397 aa).

Residues 21 to 23, Arg-36, 59 to 62, Arg-119, and Arg-152 each bind substrate; these read DVN and HFGR. ATP is bound by residues Lys-202, Glu-324, and 354–357; that span reads GGDT.

It belongs to the phosphoglycerate kinase family. In terms of assembly, monomer.

It is found in the cytoplasm. It catalyses the reaction (2R)-3-phosphoglycerate + ATP = (2R)-3-phospho-glyceroyl phosphate + ADP. It functions in the pathway carbohydrate degradation; glycolysis; pyruvate from D-glyceraldehyde 3-phosphate: step 2/5. The sequence is that of Phosphoglycerate kinase from Cereibacter sphaeroides (strain ATCC 17025 / ATH 2.4.3) (Rhodobacter sphaeroides).